Consider the following 370-residue polypeptide: MKTKLILLYGGKSAEHEVSLQTAFSVINALDLEKFEAEPIYITNEGEWVQGPLLTGKLDFVEQLRFSATNTVKLAATESEKSEGEAISPAVLEADDQETVVFPLLHGPNGEDGTVQGLFEVLNIPYVGNGVLASSAAMDKIVMKKIFADAGIPQVPAVAVRLIDWKNYQEEMVSEMEEVLTYPVFVKPANLGSSVGISKATNKKELEDAMTEAFLYDRRVVVEQGVVAREIEMGVLGNDTPVCSVPGEILPEGAVATFYDYKAKYQDNNTALIIPTEVDPEILEQMKEYAVQAFLGLDASGLVRADFFLTDDNQLFLNEVNTMPGFTPYSMYPLLWQETGLPYSALIERLVDLAKERHAAKNALKYKLED.

An ATP-grasp domain is found at 144–352 (KKIFADAGIP…YSALIERLVD (209 aa)). 177 to 232 (EEVLTYPVFVKPANLGSSVGISKATNKKELEDAMTEAFLYDRRVVVEQGVVAREIE) provides a ligand contact to ATP. Asp-306, Glu-319, and Asn-321 together coordinate Mg(2+).

The protein belongs to the D-alanine--D-alanine ligase family. Mg(2+) serves as cofactor. Requires Mn(2+) as cofactor.

Its subcellular location is the cytoplasm. The catalysed reaction is 2 D-alanine + ATP = D-alanyl-D-alanine + ADP + phosphate + H(+). Its pathway is cell wall biogenesis; peptidoglycan biosynthesis. Its function is as follows. Cell wall formation. In Listeria welshimeri serovar 6b (strain ATCC 35897 / DSM 20650 / CCUG 15529 / CIP 8149 / NCTC 11857 / SLCC 5334 / V8), this protein is D-alanine--D-alanine ligase.